The sequence spans 219 residues: uncharacterized protein (219 aa).

Composition is skewed to basic and acidic residues over residues 1–20 (METP…ESLR), 30–39 (AGRELVELRV), and 156–170 (QEVR…ELQR). Positions 1-195 (METPIEREIR…PSLTASRGDG (195 aa)) are disordered.

The protein belongs to the MISP family.

This is an uncharacterized protein from Homo sapiens (Human).